Consider the following 189-residue polypeptide: UPF0301 protein Cgl3084/cg3414 (189 aa).

The protein belongs to the UPF0301 (AlgH) family.

In Corynebacterium glutamicum (strain ATCC 13032 / DSM 20300 / JCM 1318 / BCRC 11384 / CCUG 27702 / LMG 3730 / NBRC 12168 / NCIMB 10025 / NRRL B-2784 / 534), this protein is UPF0301 protein Cgl3084/cg3414.